A 413-amino-acid polypeptide reads, in one-letter code: RING-H2 finger protein ATL54 (413 aa).

The chain crosses the membrane as a helical span at residues 83–103 (ISIITITGAVLAILLTGFFLV). An RING-type; atypical zinc finger spans residues 177 to 219 (CPVCLNEFEEDESLRLLPKCNHAFHISCIDTWLSSHTNCPLCR). 2 disordered regions span residues 238-258 (VTPGGSGSHLENDGVDEEDHG) and 321-413 (THVE…VFPL). Low complexity predominate over residues 387–401 (SSSTLKTNGSSSSVS). A compositionally biased stretch (polar residues) spans 402 to 413 (CFNKNKSSVFPL).

Belongs to the RING-type zinc finger family. ATL subfamily.

The protein localises to the membrane. It catalyses the reaction S-ubiquitinyl-[E2 ubiquitin-conjugating enzyme]-L-cysteine + [acceptor protein]-L-lysine = [E2 ubiquitin-conjugating enzyme]-L-cysteine + N(6)-ubiquitinyl-[acceptor protein]-L-lysine.. The protein operates within protein modification; protein ubiquitination. The protein is RING-H2 finger protein ATL54 (ATL54) of Arabidopsis thaliana (Mouse-ear cress).